The primary structure comprises 433 residues: 3-phosphoshikimate 1-carboxyvinyltransferase (433 aa).

The 3-phosphoshikimate site is built by K22, S23, and R27. A phosphoenolpyruvate-binding site is contributed by K22. Residues G95 and R123 each coordinate phosphoenolpyruvate. 3-phosphoshikimate-binding residues include S167, Q169, D315, and K342. A phosphoenolpyruvate-binding site is contributed by Q169. D315 serves as the catalytic Proton acceptor. Residues R346 and R387 each coordinate phosphoenolpyruvate.

This sequence belongs to the EPSP synthase family. In terms of assembly, monomer.

It is found in the cytoplasm. The catalysed reaction is 3-phosphoshikimate + phosphoenolpyruvate = 5-O-(1-carboxyvinyl)-3-phosphoshikimate + phosphate. It participates in metabolic intermediate biosynthesis; chorismate biosynthesis; chorismate from D-erythrose 4-phosphate and phosphoenolpyruvate: step 6/7. In terms of biological role, catalyzes the transfer of the enolpyruvyl moiety of phosphoenolpyruvate (PEP) to the 5-hydroxyl of shikimate-3-phosphate (S3P) to produce enolpyruvyl shikimate-3-phosphate and inorganic phosphate. The protein is 3-phosphoshikimate 1-carboxyvinyltransferase of Legionella pneumophila (strain Paris).